A 309-amino-acid chain; its full sequence is Protein FdhE (309 aa).

The protein belongs to the FdhE family.

The protein localises to the cytoplasm. Necessary for formate dehydrogenase activity. The polypeptide is Protein FdhE (Salmonella enteritidis PT4 (strain P125109)).